Reading from the N-terminus, the 1045-residue chain is DNA polymerase (1045 aa).

The tract at residues 331-355 (IKENEESDSESDNDDEEDKKENDGA) is disordered. A compositionally biased stretch (acidic residues) spans 335–348 (EESDSESDNDDEED).

It belongs to the DNA polymerase type-B family.

The catalysed reaction is DNA(n) + a 2'-deoxyribonucleoside 5'-triphosphate = DNA(n+1) + diphosphate. The sequence is that of DNA polymerase (dpo) from Phaeocystis pouchetii (PpV01).